The chain runs to 365 residues: Putative glycosyltransferase C06E1.7 (365 aa).

The protein belongs to the glycosyltransferase 11 family.

The sequence is that of Putative glycosyltransferase C06E1.7 from Caenorhabditis elegans.